Reading from the N-terminus, the 367-residue chain is Peptide chain release factor 2 (367 aa).

Gln-251 carries the N5-methylglutamine modification.

Belongs to the prokaryotic/mitochondrial release factor family. Methylated by PrmC. Methylation increases the termination efficiency of RF2.

The protein resides in the cytoplasm. Peptide chain release factor 2 directs the termination of translation in response to the peptide chain termination codons UGA and UAA. This is Peptide chain release factor 2 from Nautilia profundicola (strain ATCC BAA-1463 / DSM 18972 / AmH).